Here is a 195-residue protein sequence, read N- to C-terminus: Holliday junction branch migration complex subunit RuvA (195 aa).

Residues 1–66 form a domain I region; that stretch reads MNYLIFKVIY…LIIKDLYGFR (66 aa). A domain II region spans residues 67–141; sequence TYNERLLFID…KYINKVNDKN (75 aa). A region of interest (flexible linker) is located at residue N141. The interval 141–195 is domain III; the sequence is NNWAKELSIGLENLGYTKKDIEYAITKVKINSQQDIDISEIISSAIKEISLRHEN.

This sequence belongs to the RuvA family. In terms of assembly, homotetramer. Forms an RuvA(8)-RuvB(12)-Holliday junction (HJ) complex. HJ DNA is sandwiched between 2 RuvA tetramers; dsDNA enters through RuvA and exits via RuvB. An RuvB hexamer assembles on each DNA strand where it exits the tetramer. Each RuvB hexamer is contacted by two RuvA subunits (via domain III) on 2 adjacent RuvB subunits; this complex drives branch migration. In the full resolvosome a probable DNA-RuvA(4)-RuvB(12)-RuvC(2) complex forms which resolves the HJ.

Its subcellular location is the cytoplasm. Functionally, the RuvA-RuvB-RuvC complex processes Holliday junction (HJ) DNA during genetic recombination and DNA repair, while the RuvA-RuvB complex plays an important role in the rescue of blocked DNA replication forks via replication fork reversal (RFR). RuvA specifically binds to HJ cruciform DNA, conferring on it an open structure. The RuvB hexamer acts as an ATP-dependent pump, pulling dsDNA into and through the RuvAB complex. HJ branch migration allows RuvC to scan DNA until it finds its consensus sequence, where it cleaves and resolves the cruciform DNA. In Ureaplasma parvum serovar 3 (strain ATCC 27815 / 27 / NCTC 11736), this protein is Holliday junction branch migration complex subunit RuvA.